The chain runs to 325 residues: tRNA U34 carboxymethyltransferase (325 aa).

Residues Lys91, Trp105, Lys110, Gly130, 152-154, 181-182, Met197, Tyr201, and Arg316 each bind carboxy-S-adenosyl-L-methionine; these read DPS and ME.

It belongs to the class I-like SAM-binding methyltransferase superfamily. CmoB family. As to quaternary structure, homotetramer.

It catalyses the reaction carboxy-S-adenosyl-L-methionine + 5-hydroxyuridine(34) in tRNA = 5-carboxymethoxyuridine(34) in tRNA + S-adenosyl-L-homocysteine + H(+). Catalyzes carboxymethyl transfer from carboxy-S-adenosyl-L-methionine (Cx-SAM) to 5-hydroxyuridine (ho5U) to form 5-carboxymethoxyuridine (cmo5U) at position 34 in tRNAs. The sequence is that of tRNA U34 carboxymethyltransferase from Saccharophagus degradans (strain 2-40 / ATCC 43961 / DSM 17024).